The primary structure comprises 220 residues: Cytidylate kinase (220 aa).

Residue 9-17 (GPAASGKST) coordinates ATP.

This sequence belongs to the cytidylate kinase family. Type 1 subfamily.

It is found in the cytoplasm. It catalyses the reaction CMP + ATP = CDP + ADP. The catalysed reaction is dCMP + ATP = dCDP + ADP. In Thermotoga maritima (strain ATCC 43589 / DSM 3109 / JCM 10099 / NBRC 100826 / MSB8), this protein is Cytidylate kinase.